The following is a 241-amino-acid chain: MDMLNQILSINNGGAYGGGKAGGAFDPLTFAMKPQVVIRALCWLFSVVVFGCISSEGWTEKDGKEYCLYNGDGMACKYGNMVGVFGFLASMGFMGGEFLFERMSSVKSRKRYVMADMGFSALWTFMYFVAFLYLWSQWSSSAPPPLGIGAGSMKTAIWFCLFSIVSWALCALMAYKRFLIGAGDEFTSAFETDPANVVHQQAYGYSMDNDNDQYSASPFGQPQQGGMEQQQSGMEYQQPTY.

Positions Phe-30–Leu-179 constitute an MARVEL domain. Transmembrane regions (helical) follow at residues Pro-34–Ser-54, Met-81–Glu-101, Ala-115–Trp-135, and Thr-155–Tyr-175. The disordered stretch occupies residues Ala-216–Tyr-241. Over residues Gly-220–Tyr-241 the composition is skewed to low complexity.

Belongs to the synaptogyrin family.

It localises to the cytoplasmic vesicle membrane. The protein resides in the cytoplasmic vesicle. The protein localises to the secretory vesicle membrane. Its subcellular location is the secretory vesicle. It is found in the synaptic vesicle membrane. In terms of biological role, required for the correct formation of synaptic vesicles at nerve terminals and has a role in the regulation of the synaptic vesicle exo-endocytic cycle. The sequence is that of Synaptogyrin from Drosophila melanogaster (Fruit fly).